Reading from the N-terminus, the 151-residue chain is Putative superoxide dismutase [Cu-Zn] (151 aa).

Residues His-43, His-45, and His-60 each contribute to the Cu cation site. Cys-54 and Cys-144 are joined by a disulfide. Zn(2+) contacts are provided by His-60, His-68, His-77, and Asp-80. Cu cation is bound at residue His-118.

This sequence belongs to the Cu-Zn superoxide dismutase family. The cofactor is Cu cation. Requires Zn(2+) as cofactor.

The catalysed reaction is 2 superoxide + 2 H(+) = H2O2 + O2. Its function is as follows. Nonessential for normal virus replication. Could be either non-functional or with a low activity. The sequence is that of Putative superoxide dismutase [Cu-Zn] (SOD) from Lepidoptera (butterflies and moths).